The sequence spans 124 residues: Large ribosomal subunit protein bL12 (124 aa).

Belongs to the bacterial ribosomal protein bL12 family. As to quaternary structure, homodimer. Part of the ribosomal stalk of the 50S ribosomal subunit. Forms a multimeric L10(L12)X complex, where L10 forms an elongated spine to which 2 to 4 L12 dimers bind in a sequential fashion. Binds GTP-bound translation factors.

In terms of biological role, forms part of the ribosomal stalk which helps the ribosome interact with GTP-bound translation factors. Is thus essential for accurate translation. This chain is Large ribosomal subunit protein bL12, found in Wolinella succinogenes (strain ATCC 29543 / DSM 1740 / CCUG 13145 / JCM 31913 / LMG 7466 / NCTC 11488 / FDC 602W) (Vibrio succinogenes).